The following is a 253-amino-acid chain: Ubiquinone biosynthesis O-methyltransferase (253 aa).

S-adenosyl-L-methionine-binding residues include arginine 45, glycine 76, aspartate 97, and methionine 140.

This sequence belongs to the methyltransferase superfamily. UbiG/COQ3 family.

It catalyses the reaction a 3-demethylubiquinol + S-adenosyl-L-methionine = a ubiquinol + S-adenosyl-L-homocysteine + H(+). It carries out the reaction a 3-(all-trans-polyprenyl)benzene-1,2-diol + S-adenosyl-L-methionine = a 2-methoxy-6-(all-trans-polyprenyl)phenol + S-adenosyl-L-homocysteine + H(+). It participates in cofactor biosynthesis; ubiquinone biosynthesis. Functionally, O-methyltransferase that catalyzes the 2 O-methylation steps in the ubiquinone biosynthetic pathway. The polypeptide is Ubiquinone biosynthesis O-methyltransferase (Parvibaculum lavamentivorans (strain DS-1 / DSM 13023 / NCIMB 13966)).